A 492-amino-acid chain; its full sequence is UDP-N-acetylmuramyl-tripeptide synthetase 2 (492 aa).

UDP-N-acetyl-alpha-D-muramoyl-L-alanyl-D-glutamate is bound at residue Ser30. Residue 111–117 (GTNGKTT) coordinates ATP. UDP-N-acetyl-alpha-D-muramoyl-L-alanyl-D-glutamate contacts are provided by residues 154 to 155 (TT), Ser181, Gln187, and Arg189. Lys221 is subject to N6-carboxylysine.

The protein belongs to the MurCDEF family. MurE subfamily. Post-translationally, carboxylation is probably crucial for Mg(2+) binding and, consequently, for the gamma-phosphate positioning of ATP.

The protein resides in the cytoplasm. Its pathway is cell wall biogenesis; peptidoglycan biosynthesis. In terms of biological role, catalyzes the addition of an amino acid to the nucleotide precursor UDP-N-acetylmuramoyl-L-alanyl-D-glutamate (UMAG) in the biosynthesis of bacterial cell-wall peptidoglycan. This chain is UDP-N-acetylmuramyl-tripeptide synthetase 2, found in Oceanobacillus iheyensis (strain DSM 14371 / CIP 107618 / JCM 11309 / KCTC 3954 / HTE831).